The following is a 158-amino-acid chain: Coenzyme F420 hydrogenase subunit delta (158 aa).

This sequence belongs to the peptidase A31 family.

This chain is Coenzyme F420 hydrogenase subunit delta (frhD), found in Methanothermobacter thermautotrophicus (strain ATCC 29096 / DSM 1053 / JCM 10044 / NBRC 100330 / Delta H) (Methanobacterium thermoautotrophicum).